The primary structure comprises 259 residues: Phosphatidylglycerol--prolipoprotein diacylglyceryl transferase (259 aa).

Transmembrane regions (helical) follow at residues 12–32, 46–66, 83–103, and 109–129; these read LSLH…VYLA, IIDF…IYYV, IWNG…VLFV, and VLNP…AQAI. An a 1,2-diacyl-sn-glycero-3-phospho-(1'-sn-glycerol)-binding site is contributed by R131. 3 helical membrane-spanning segments follow: residues 167–187, 194–214, and 226–246; these read VPTF…IMVW, LVDG…RLVI, and GIRV…VFIF.

It belongs to the Lgt family.

It localises to the cell membrane. It carries out the reaction L-cysteinyl-[prolipoprotein] + a 1,2-diacyl-sn-glycero-3-phospho-(1'-sn-glycerol) = an S-1,2-diacyl-sn-glyceryl-L-cysteinyl-[prolipoprotein] + sn-glycerol 1-phosphate + H(+). The protein operates within protein modification; lipoprotein biosynthesis (diacylglyceryl transfer). Its function is as follows. Catalyzes the transfer of the diacylglyceryl group from phosphatidylglycerol to the sulfhydryl group of the N-terminal cysteine of a prolipoprotein, the first step in the formation of mature lipoproteins. The polypeptide is Phosphatidylglycerol--prolipoprotein diacylglyceryl transferase (Streptococcus equi subsp. equi (strain 4047)).